Here is a 707-residue protein sequence, read N- to C-terminus: Coiled-coil domain-containing protein 177 (707 aa).

Disordered regions lie at residues 1–65 (MVDP…EGGR) and 183–294 (PSAG…SALT). Composition is skewed to low complexity over residues 38-49 (AASSASASASAA), 183-215 (PSAG…PSSA), and 243-258 (ALSS…YSGE). Phosphoserine is present on Ser-311. Residues 364-605 (GQWELQRVHA…LQHATQVAEE (242 aa)) adopt a coiled-coil conformation. Disordered regions lie at residues 372-426 (HAKQ…RSEE), 454-581 (KLQQ…EREH), 597-637 (QHAT…RDED), and 652-707 (ERSE…LDRK). Basic and acidic residues-rich tracts occupy residues 377 to 392 (RERE…EQGR), 399 to 426 (VEER…RSEE), 454 to 484 (KLQQ…ERAQ), 491 to 514 (QRQE…RHEA), 543 to 581 (ENYE…EREH), 618 to 637 (RLEK…RDED), and 652 to 664 (ERSE…RRSA). Positions 665–675 (LESARSTARAS) are enriched in low complexity. Residues 677-707 (HVREKVREETNTRSFDRMVREAQLHASLDRK) show a composition bias toward basic and acidic residues.

In Homo sapiens (Human), this protein is Coiled-coil domain-containing protein 177 (CCDC177).